The chain runs to 476 residues: Bifunctional protein HldE (476 aa).

The segment at 1-319 (MKVSLPAFEK…EALALHHGES (319 aa)) is ribokinase. 195–198 (NMSE) contacts ATP. Aspartate 264 is a catalytic residue. The tract at residues 345 to 476 (MTNGCFDILH…AIIQNIMAKQ (132 aa)) is cytidylyltransferase.

The protein in the N-terminal section; belongs to the carbohydrate kinase PfkB family. This sequence in the C-terminal section; belongs to the cytidylyltransferase family. As to quaternary structure, homodimer.

The catalysed reaction is D-glycero-beta-D-manno-heptose 7-phosphate + ATP = D-glycero-beta-D-manno-heptose 1,7-bisphosphate + ADP + H(+). The enzyme catalyses D-glycero-beta-D-manno-heptose 1-phosphate + ATP + H(+) = ADP-D-glycero-beta-D-manno-heptose + diphosphate. Its pathway is nucleotide-sugar biosynthesis; ADP-L-glycero-beta-D-manno-heptose biosynthesis; ADP-L-glycero-beta-D-manno-heptose from D-glycero-beta-D-manno-heptose 7-phosphate: step 1/4. The protein operates within nucleotide-sugar biosynthesis; ADP-L-glycero-beta-D-manno-heptose biosynthesis; ADP-L-glycero-beta-D-manno-heptose from D-glycero-beta-D-manno-heptose 7-phosphate: step 3/4. Functionally, catalyzes the phosphorylation of D-glycero-D-manno-heptose 7-phosphate at the C-1 position to selectively form D-glycero-beta-D-manno-heptose-1,7-bisphosphate. Its function is as follows. Catalyzes the ADP transfer from ATP to D-glycero-beta-D-manno-heptose 1-phosphate, yielding ADP-D-glycero-beta-D-manno-heptose. The chain is Bifunctional protein HldE from Shewanella sp. (strain MR-4).